The chain runs to 354 residues: NADH-quinone oxidoreductase subunit H (354 aa).

Transmembrane regions (helical) follow at residues 25-45 (LVRILVVAVVILLCVAYLILW), 91-111 (WVYLVAPVMVVVPAFAVWAVI), 126-146 (LLYAISISSVGVYGVILAGWA), 170-190 (MGFALVVVMMTAGTMNLSDIV), 205-225 (FLSWNWLPLLPAFVVYFVSGI), 257-277 (LFFLAEYINMIVISALASILF), 290-310 (FIPGIVWLVLKVFLLLSVFIW), and 330-350 (VFLPVTVIWVVVVGFWIMSPL).

This sequence belongs to the complex I subunit 1 family. NDH-1 is composed of 14 different subunits. Subunits NuoA, H, J, K, L, M, N constitute the membrane sector of the complex.

It is found in the cell inner membrane. The enzyme catalyses a quinone + NADH + 5 H(+)(in) = a quinol + NAD(+) + 4 H(+)(out). Functionally, NDH-1 shuttles electrons from NADH, via FMN and iron-sulfur (Fe-S) centers, to quinones in the respiratory chain. The immediate electron acceptor for the enzyme in this species is believed to be ubiquinone. Couples the redox reaction to proton translocation (for every two electrons transferred, four hydrogen ions are translocated across the cytoplasmic membrane), and thus conserves the redox energy in a proton gradient. This subunit may bind ubiquinone. The chain is NADH-quinone oxidoreductase subunit H from Paraburkholderia phymatum (strain DSM 17167 / CIP 108236 / LMG 21445 / STM815) (Burkholderia phymatum).